A 392-amino-acid chain; its full sequence is L-rhamnonate dehydratase (392 aa).

Substrate-binding residues include His22 and Arg48. Mg(2+) contacts are provided by Asp214, Glu240, and Glu268. Catalysis depends on His318, which acts as the Proton acceptor. Glu338 lines the substrate pocket.

The protein belongs to the mandelate racemase/muconate lactonizing enzyme family. RhamD subfamily. Homooctamer; tetramer of dimers. It depends on Mg(2+) as a cofactor.

It catalyses the reaction L-rhamnonate = 2-dehydro-3-deoxy-L-rhamnonate + H2O. Its function is as follows. Catalyzes the dehydration of L-rhamnonate to 2-keto-3-deoxy-L-rhamnonate (KDR). In Paraburkholderia phymatum (strain DSM 17167 / CIP 108236 / LMG 21445 / STM815) (Burkholderia phymatum), this protein is L-rhamnonate dehydratase.